Here is a 425-residue protein sequence, read N- to C-terminus: Adenylosuccinate synthetase (425 aa).

GTP is bound by residues 12–18 (GDEGKGK) and 40–42 (GHT). The Proton acceptor role is filled by D13. Residues D13 and G40 each coordinate Mg(2+). IMP-binding positions include 13–16 (DEGK), 38–41 (NAGH), T130, R144, Q224, T239, and R301. H41 (proton donor) is an active-site residue. 297–303 (TVSNRRR) is a binding site for substrate. Residues R303, 329 to 331 (KLD), and 411 to 413 (STS) contribute to the GTP site.

It belongs to the adenylosuccinate synthetase family. Homodimer. The cofactor is Mg(2+).

Its subcellular location is the cytoplasm. It catalyses the reaction IMP + L-aspartate + GTP = N(6)-(1,2-dicarboxyethyl)-AMP + GDP + phosphate + 2 H(+). It participates in purine metabolism; AMP biosynthesis via de novo pathway; AMP from IMP: step 1/2. In terms of biological role, plays an important role in the de novo pathway of purine nucleotide biosynthesis. Catalyzes the first committed step in the biosynthesis of AMP from IMP. The polypeptide is Adenylosuccinate synthetase (Wolbachia sp. subsp. Drosophila simulans (strain wRi)).